We begin with the raw amino-acid sequence, 336 residues long: Quinolinate synthase (336 aa).

Residues His25 and Ser42 each coordinate iminosuccinate. [4Fe-4S] cluster is bound at residue Cys86. Iminosuccinate is bound by residues 117–119 (YIN) and Ser138. Cys198 is a binding site for [4Fe-4S] cluster. Residues 224–226 (HPE) and Thr241 each bind iminosuccinate. A [4Fe-4S] cluster-binding site is contributed by Cys288.

This sequence belongs to the quinolinate synthase family. Type 3 subfamily. [4Fe-4S] cluster serves as cofactor.

The protein localises to the cytoplasm. It carries out the reaction iminosuccinate + dihydroxyacetone phosphate = quinolinate + phosphate + 2 H2O + H(+). It functions in the pathway cofactor biosynthesis; NAD(+) biosynthesis; quinolinate from iminoaspartate: step 1/1. Functionally, catalyzes the condensation of iminoaspartate with dihydroxyacetone phosphate to form quinolinate. The protein is Quinolinate synthase of Helicobacter pylori (strain HPAG1).